Here is a 364-residue protein sequence, read N- to C-terminus: 3'(2'),5'-bisphosphate nucleotidase 1 (364 aa).

Asp54 acts as the Proton acceptor in catalysis. Mg(2+) contacts are provided by Glu77, Asp141, Ile143, and Asp144. Thr146 acts as the Proton acceptor in catalysis. The adenosine 3',5'-bisphosphate site is built by Thr146, His243, Ser272, Lys275, Arg289, and Asp302. The AMP site is built by His243, Ser272, Lys275, Arg289, and Asp302. Position 302 (Asp302) interacts with Mg(2+).

This sequence belongs to the inositol monophosphatase superfamily. The cofactor is Mg(2+).

The catalysed reaction is 3'-phosphoadenylyl sulfate + H2O = adenosine 5'-phosphosulfate + phosphate. It carries out the reaction adenosine 3',5'-bisphosphate + H2O = AMP + phosphate. The enzyme catalyses adenosine 2',5'-bisphosphate + H2O = AMP + phosphate. Phosphatase that converts adenosine 3'-phosphate 5'-phosphosulfate (PAPS) to adenosine 5'-phosphosulfate (APS) and 3'(2')-phosphoadenosine 5'-phosphate (PAP) to AMP. Regulates the flux of sulfur in the sulfur-activation pathway by converting PAPS to APS. Involved in salt tolerance. In Candida albicans (strain SC5314 / ATCC MYA-2876) (Yeast), this protein is 3'(2'),5'-bisphosphate nucleotidase 1 (HAL21).